We begin with the raw amino-acid sequence, 765 residues long: Transient receptor potential cation channel subfamily V member 6 (765 aa).

Residues 1 to 367 are Cytoplasmic-facing; that stretch reads MGPLQGDGGP…SLKWKRYGRP (367 aa). ANK repeat units lie at residues 84–114, 118–147, and 156–185; these read IWES…KVHQ, MGET…ELVF, and EGQT…SVSA. An interaction with calmodulin region spans residues 133 to 143; the sequence is EAAMVLMEAAP. Tyrosine 201 carries the post-translational modification Phosphotyrosine; by SRC. 3 ANK repeats span residues 202–231, 235–277, and 279–308; these read FGEH…DIRA, LGNT…LVPN, and QGLT…HTQW. A helical transmembrane segment spans residues 368 to 388; the sequence is YFCMLGAIYLLYIICFTMCCI. At 389-425 the chain is on the extracellular side; sequence YRPLKPRTNNRTSPRDNTLLQQKLLQEAYMTPKDDIR. Residue asparagine 398 is glycosylated (N-linked (GlcNAc...) asparagine). Residues 426 to 448 form a helical membrane-spanning segment; it reads LVGELVTVIGAIIILLVEVPDIF. Residues 449–463 are Cytoplasmic-facing; sequence RMGVTRFFGQTILGG. The helical transmembrane segment at 464-483 threads the bilayer; it reads PFHVLIITYAFMVLVTMVMR. At 484 to 489 the chain is on the extracellular side; that stretch reads LISASG. The chain crosses the membrane as a helical span at residues 490–509; the sequence is EVVPMSFALVLGWCNVMYFA. At 510–529 the chain is on the cytoplasmic side; sequence RGFQMLGPFTIMIQKMIFGD. Residues 530 to 552 form a helical membrane-spanning segment; sequence LMRFCWLMAVVILGFASAFYIIF. At 553–565 the chain is on the extracellular side; it reads QTEDPEELGHFYD. The segment at residues 566-585 is an intramembrane region (pore-forming); that stretch reads YPMALFSTFELFLTIIDGPA. Residues 581-585 carry the Selectivity filter motif; sequence IDGPA. Ca(2+) is bound at residue aspartate 582. Topologically, residues 586 to 596 are extracellular; the sequence is NYNVDLPFMYS. Residues 597 to 617 form a helical membrane-spanning segment; sequence ITYAAFAIIATLLMLNLLIAM. The Cytoplasmic segment spans residues 618–765; that stretch reads MGDTHWRVAH…EDGESWEYQI (148 aa). An interaction with S100A10 region spans residues 638 to 642; that stretch reads VATTV. The interaction with calmodulin stretch occupies residues 731–751; it reads SSANWERLRQGTLRRDLRGII. Residue threonine 742 is modified to Phosphothreonine; by PKC/PRKCA.

The protein belongs to the transient receptor (TC 1.A.4) family. TrpV subfamily. TRPV6 sub-subfamily. Homotetramer. Probably also forms heterotetramers with TRPV5. Interacts with TRPV5. Interacts with S100A10 and probably with the ANAX2-S100A10 heterotetramer. The interaction with S100A10 is required for the trafficking to the plasma membrane. Interacts with BSPRY. Interacts with TCAF1 and TCAF2 isoform 2. Interacts with calmodulin. Post-translationally, glycosylated. In terms of processing, phosphorylation at Tyr-201 by SRC leads to an increased calcium influx through the channel. Probably dephosphorylated at this site by PTPN1. Phosphorylation by PRKCA at the calmodulin binding site delays channel inactivation. Expressed at high levels in the gastrointestinal tract, including esophagus, stomach, duodenum, jejunum, ileum and colon, and in pancreas, placenta, prostate and salivary gland. Expressed at moderate levels in liver, kidney and testis. Expressed in trophoblasts of placenta villus trees (at protein level). Expressed in locally advanced prostate cancer, metastatic and androgen-insensitive prostatic lesions but not detected in healthy prostate tissue and benign prostatic hyperplasia.

The protein localises to the cell membrane. The enzyme catalyses Ca(2+)(in) = Ca(2+)(out). In terms of biological role, calcium selective cation channel that mediates Ca(2+) uptake in various tissues, including the intestine. Important for normal Ca(2+) ion homeostasis in the body, including bone and skin. The channel is activated by low internal calcium level, probably including intracellular calcium store depletion, and the current exhibits an inward rectification. Inactivation includes both a rapid Ca(2+)-dependent and a slower Ca(2+)-calmodulin-dependent mechanism; the latter may be regulated by phosphorylation. In vitro, is slowly inhibited by Mg(2+) in a voltage-independent manner. Heteromeric assembly with TRPV5 seems to modify channel properties. TRPV5-TRPV6 heteromultimeric concatemers exhibit voltage-dependent gating. The polypeptide is Transient receptor potential cation channel subfamily V member 6 (TRPV6) (Homo sapiens (Human)).